The chain runs to 91 residues: Protein YchS (91 aa).

The chain is Protein YchS (ychS) from Escherichia coli O157:H7.